The sequence spans 326 residues: Tetraacyldisaccharide 4'-kinase (326 aa).

Residue 55 to 62 (TAGGNGKT) coordinates ATP.

This sequence belongs to the LpxK family.

It carries out the reaction a lipid A disaccharide + ATP = a lipid IVA + ADP + H(+). It functions in the pathway glycolipid biosynthesis; lipid IV(A) biosynthesis; lipid IV(A) from (3R)-3-hydroxytetradecanoyl-[acyl-carrier-protein] and UDP-N-acetyl-alpha-D-glucosamine: step 6/6. Functionally, transfers the gamma-phosphate of ATP to the 4'-position of a tetraacyldisaccharide 1-phosphate intermediate (termed DS-1-P) to form tetraacyldisaccharide 1,4'-bis-phosphate (lipid IVA). This is Tetraacyldisaccharide 4'-kinase from Erwinia tasmaniensis (strain DSM 17950 / CFBP 7177 / CIP 109463 / NCPPB 4357 / Et1/99).